A 117-amino-acid polypeptide reads, in one-letter code: Large ribosomal subunit protein bL19 (117 aa).

This sequence belongs to the bacterial ribosomal protein bL19 family.

In terms of biological role, this protein is located at the 30S-50S ribosomal subunit interface and may play a role in the structure and function of the aminoacyl-tRNA binding site. The polypeptide is Large ribosomal subunit protein bL19 (Desulfosudis oleivorans (strain DSM 6200 / JCM 39069 / Hxd3) (Desulfococcus oleovorans)).